The primary structure comprises 217 residues: tRNA (guanine-N(7)-)-methyltransferase (217 aa).

Glu-48, Glu-73, Asn-100, and Asp-123 together coordinate S-adenosyl-L-methionine. Residue Asp-123 is part of the active site. Residues Lys-127 and Asp-159 each contribute to the substrate site.

This sequence belongs to the class I-like SAM-binding methyltransferase superfamily. TrmB family.

It carries out the reaction guanosine(46) in tRNA + S-adenosyl-L-methionine = N(7)-methylguanosine(46) in tRNA + S-adenosyl-L-homocysteine. Its pathway is tRNA modification; N(7)-methylguanine-tRNA biosynthesis. Its function is as follows. Catalyzes the formation of N(7)-methylguanine at position 46 (m7G46) in tRNA. This Leptospira interrogans serogroup Icterohaemorrhagiae serovar copenhageni (strain Fiocruz L1-130) protein is tRNA (guanine-N(7)-)-methyltransferase.